Consider the following 209-residue polypeptide: Uracil phosphoribosyltransferase (209 aa).

5-phospho-alpha-D-ribose 1-diphosphate contacts are provided by residues Arg79, Arg104, and 131-139; that span reads DPMLATGGS. Residues Ile194 and 199 to 201 contribute to the uracil site; that span reads GDA. Asp200 serves as a coordination point for 5-phospho-alpha-D-ribose 1-diphosphate.

The protein belongs to the UPRTase family. Mg(2+) serves as cofactor.

The catalysed reaction is UMP + diphosphate = 5-phospho-alpha-D-ribose 1-diphosphate + uracil. Its pathway is pyrimidine metabolism; UMP biosynthesis via salvage pathway; UMP from uracil: step 1/1. With respect to regulation, allosterically activated by GTP. Functionally, catalyzes the conversion of uracil and 5-phospho-alpha-D-ribose 1-diphosphate (PRPP) to UMP and diphosphate. The chain is Uracil phosphoribosyltransferase from Clostridium novyi (strain NT).